A 306-amino-acid chain; its full sequence is Protein pxr1 (306 aa).

Over residues Met1–Lys11 the composition is skewed to basic residues. Disordered stretches follow at residues Met1–Gly27 and Ala148–Pro241. The span at Asp15 to Gly27 shows a compositional bias: polar residues. The region spanning Thr25 to Lys79 is the G-patch domain. Residues Asn182–Gln191 are compositionally biased toward basic and acidic residues. The segment covering Lys219 to Lys228 has biased composition (basic residues).

The protein belongs to the PINX1 family.

Its subcellular location is the nucleus. The protein resides in the nucleolus. Its function is as follows. Involved in rRNA-processing at A0, A1 and A2 sites and negatively regulates telomerase. The chain is Protein pxr1 (pxr1) from Aspergillus oryzae (strain ATCC 42149 / RIB 40) (Yellow koji mold).